The sequence spans 108 residues: Probable chaperone-like protein YdbL (108 aa).

An N-terminal signal peptide occupies residues 1 to 21 (MKKTLLLCAFLVGLVSSNVMA).

The protein resides in the periplasm. Probably acts as a chaperone-like protein that contributes to, but is not required for, the formation of the YdbH-YnbE intermembrane bridge. Affects the function and the structure of the YdbH-YnbE complex. Overexpression of ydbL causes a negative effect on YdbH-YnbE function. The chain is Probable chaperone-like protein YdbL (ydbL) from Escherichia coli (strain K12).